We begin with the raw amino-acid sequence, 566 residues long: MSSRKGTRSSRIVTLERSANSSLSNNGGGDDSFGSTLLETSRLQEKDHLTSLNSRLATYIDKVRQLEQENNRLQVQIRDIEVVEKKEKSNLADRFEAEKARLRRALDSAQDELAKYRIEYDAAKVEVKKLKPQVEKLERELAGAEEQALHAQSIADQSQAKQKTLQARNDKLVVENDDLKKQNITLRDTVEGLKKAVEDETLLRTAANNKIKALEEDLAFALQQHKGELEEVRHKRQVDMTTYAKQINDEYQSKLQDQIEEMRAQFKNNLHQNKTAFEDAYKNKLNAARERQEEAVSEAIHLRARVRDLETSSSGNASLIERLRSELDTLKRSFQEKLDDKDARIAELNQEIERMMSEFHDLLDVKIQLDAELKTYQALLEGEEERLNLTQEAPQNTSVHHVSFSSGGASAQRGVKRRRVVDVNGEDQDIDYLNRRSKLNKETVGPVGIDEVDEEGKWVRVANNSEEEQSIGGYKLVVKAGNKEASFQFSSRMKLAPHASATVWSADAGAVHHPPEVYVMKKQQWPIGDNPSARLEDSEGDTVSSITVEFSESSDPSDPADRCSIM.

Residues 1-37 (MSSRKGTRSSRIVTLERSANSSLSNNGGGDDSFGSTL) form a disordered region. An N-acetylserine modification is found at Ser-2. The head stretch occupies residues 13 to 47 (VTLERSANSSLSNNGGGDDSFGSTLLETSRLQEKD). One can recognise an IF rod domain in the interval 45 to 387 (EKDHLTSLNS…ALLEGEEERL (343 aa)). A coil 1A region spans residues 48-82 (HLTSLNSRLATYIDKVRQLEQENNRLQVQIRDIEV). The interval 83 to 94 (VEKKEKSNLADR) is linker 1. The tract at residues 95 to 228 (FEAEKARLRR…AFALQQHKGE (134 aa)) is coil 1B. The interval 229-256 (LEEVRHKRQVDMTTYAKQINDEYQSKLQ) is linker 2. The tract at residues 257–385 (DQIEEMRAQF…YQALLEGEEE (129 aa)) is coil 2. Positions 386–566 (RLNLTQEAPQ…SDPADRCSIM (181 aa)) are tail. An LTD domain is found at 435-550 (RRSKLNKETV…DTVSSITVEF (116 aa)). The interval 528–566 (GDNPSARLEDSEGDTVSSITVEFSESSDPSDPADRCSIM) is disordered. The span at 541–556 (DTVSSITVEFSESSDP) shows a compositional bias: polar residues. Residue Cys-563 is modified to Cysteine methyl ester. A lipid anchor (S-farnesyl cysteine) is attached at Cys-563. A propeptide spans 564-566 (SIM) (removed in mature form).

The protein belongs to the intermediate filament family. In terms of assembly, interacts with LEM domain proteins lem-2 and emr-1. May interact with unc-84; this interaction may be required to complete the connection between the nuclear lamina and the cytoskeleton. Ubiquitous. Expressed in all cells, except in cells undergoing spermatogenesis.

It localises to the nucleus envelope. The protein localises to the nucleus inner membrane. Major component of the nuclear lamina, a fibrous layer on the nucleoplasmic side of the inner nuclear membrane. Provides a framework for the nuclear envelope and probably also interacts with chromatin. Essential to maintain the shape and integrity of the nucleus, and for DNA replication. Involved in spatial organization of nuclear pore complexes. It is not a target for ced-3 during apoptosis, suggesting that lamin cleavage is not essential for apoptosis in C.elegans. In Caenorhabditis elegans, this protein is Lamin-1.